We begin with the raw amino-acid sequence, 335 residues long: uncharacterized protein (335 aa).

Disordered regions lie at residues 153–174 (LNDK…SDRI), 218–239 (HTSV…QEEV), and 254–295 (RCKV…PVTS). Positions 156-170 (KEDEEKLDQTTESEE) are enriched in acidic residues. Composition is skewed to low complexity over residues 222–234 (RRSM…SASS) and 275–295 (THTS…PVTS).

This is an uncharacterized protein from Caenorhabditis elegans.